We begin with the raw amino-acid sequence, 427 residues long: Glutamate-1-semialdehyde 2,1-aminomutase (427 aa).

Lys-266 carries the post-translational modification N6-(pyridoxal phosphate)lysine.

The protein belongs to the class-III pyridoxal-phosphate-dependent aminotransferase family. HemL subfamily. As to quaternary structure, homodimer. Requires pyridoxal 5'-phosphate as cofactor.

Its subcellular location is the cytoplasm. It carries out the reaction (S)-4-amino-5-oxopentanoate = 5-aminolevulinate. It participates in porphyrin-containing compound metabolism; protoporphyrin-IX biosynthesis; 5-aminolevulinate from L-glutamyl-tRNA(Glu): step 2/2. The protein is Glutamate-1-semialdehyde 2,1-aminomutase of Dechloromonas aromatica (strain RCB).